Here is a 489-residue protein sequence, read N- to C-terminus: 3-octaprenyl-4-hydroxybenzoate carboxy-lyase (489 aa).

Asn172 is a binding site for Mn(2+). Prenylated FMN is bound by residues 175 to 177 (IYR), 189 to 191 (RWL), and 194 to 195 (RG). Glu238 is a Mn(2+) binding site. The Proton donor role is filled by Asp287.

It belongs to the UbiD family. In terms of assembly, homohexamer. Prenylated FMN is required as a cofactor. Requires Mn(2+) as cofactor.

The protein localises to the cell membrane. The catalysed reaction is a 4-hydroxy-3-(all-trans-polyprenyl)benzoate + H(+) = a 2-(all-trans-polyprenyl)phenol + CO2. The protein operates within cofactor biosynthesis; ubiquinone biosynthesis. Catalyzes the decarboxylation of 3-octaprenyl-4-hydroxy benzoate to 2-octaprenylphenol, an intermediate step in ubiquinone biosynthesis. This Salmonella paratyphi B (strain ATCC BAA-1250 / SPB7) protein is 3-octaprenyl-4-hydroxybenzoate carboxy-lyase.